The primary structure comprises 81 residues: Photosystem I iron-sulfur center (81 aa).

2 4Fe-4S ferredoxin-type domains span residues 2–31 and 39–68; these read SHKI…MIPW and IASA…VRVY. The [4Fe-4S] cluster site is built by Cys-11, Cys-14, Cys-17, Cys-21, Cys-48, Cys-51, Cys-54, and Cys-58.

As to quaternary structure, the eukaryotic PSI reaction center is composed of at least 11 subunits. The cofactor is [4Fe-4S] cluster.

Its subcellular location is the plastid. It is found in the chloroplast thylakoid membrane. The catalysed reaction is reduced [plastocyanin] + hnu + oxidized [2Fe-2S]-[ferredoxin] = oxidized [plastocyanin] + reduced [2Fe-2S]-[ferredoxin]. In terms of biological role, apoprotein for the two 4Fe-4S centers FA and FB of photosystem I (PSI); essential for photochemical activity. FB is the terminal electron acceptor of PSI, donating electrons to ferredoxin. The C-terminus interacts with PsaA/B/D and helps assemble the protein into the PSI complex. Required for binding of PsaD and PsaE to PSI. PSI is a plastocyanin-ferredoxin oxidoreductase, converting photonic excitation into a charge separation, which transfers an electron from the donor P700 chlorophyll pair to the spectroscopically characterized acceptors A0, A1, FX, FA and FB in turn. This is Photosystem I iron-sulfur center from Chara vulgaris (Common stonewort).